The sequence spans 314 residues: 2-desacetyl-2-hydroxyethyl bacteriochlorophyllide A dehydrogenase (314 aa).

It functions in the pathway porphyrin-containing compound metabolism; bacteriochlorophyll biosynthesis (light-independent). In terms of biological role, this protein catalyzes the penultimate step in bacteriochlorophyll a biosynthesis. This Rhodobacter capsulatus (strain ATCC BAA-309 / NBRC 16581 / SB1003) protein is 2-desacetyl-2-hydroxyethyl bacteriochlorophyllide A dehydrogenase (bchC).